The following is a 286-amino-acid chain: DNA-directed RNA polymerase subunit Rpo3 (286 aa).

This sequence belongs to the archaeal Rpo3/eukaryotic RPB3 RNA polymerase subunit family. Part of the RNA polymerase complex.

The protein localises to the cytoplasm. The catalysed reaction is RNA(n) + a ribonucleoside 5'-triphosphate = RNA(n+1) + diphosphate. In terms of biological role, DNA-dependent RNA polymerase (RNAP) catalyzes the transcription of DNA into RNA using the four ribonucleoside triphosphates as substrates. This is DNA-directed RNA polymerase subunit Rpo3 from Aeropyrum pernix (strain ATCC 700893 / DSM 11879 / JCM 9820 / NBRC 100138 / K1).